Reading from the N-terminus, the 115-residue chain is Holo-[acyl-carrier-protein] synthase (115 aa).

Residues aspartate 8 and glutamate 50 each coordinate Mg(2+).

This sequence belongs to the P-Pant transferase superfamily. AcpS family. The cofactor is Mg(2+).

The protein resides in the cytoplasm. It carries out the reaction apo-[ACP] + CoA = holo-[ACP] + adenosine 3',5'-bisphosphate + H(+). Functionally, transfers the 4'-phosphopantetheine moiety from coenzyme A to a Ser of acyl-carrier-protein. This chain is Holo-[acyl-carrier-protein] synthase, found in Pseudarthrobacter chlorophenolicus (strain ATCC 700700 / DSM 12829 / CIP 107037 / JCM 12360 / KCTC 9906 / NCIMB 13794 / A6) (Arthrobacter chlorophenolicus).